Here is a 251-residue protein sequence, read N- to C-terminus: Transcription initiation factor TFIID subunit 9B (251 aa).

M1 carries the N-acetylmethionine modification. S147 carries the phosphoserine modification. 2 positions are modified to phosphothreonine: T159 and T174. S177 is modified (phosphoserine). The disordered stretch occupies residues 229–251 (QNTANEANPLKRKHEDDDDNDIM).

The protein belongs to the TAF9 family. Binds TAF5 and TAF6. Component of TFIID and the TATA-binding protein-free TAF complex (TFTC). TFIID is composed of TATA binding protein (TBP) and a number of TBP-associated factors (TAFs). Binds N-terminal domain of p53/TP53 which is essential for transcription.

It localises to the nucleus. Essential for cell viability. TAF9 and TAF9B are involved in transcriptional activation as well as repression of distinct but overlapping sets of genes. May have a role in gene regulation associated with apoptosis. TAFs are components of the transcription factor IID (TFIID) complex, the TBP-free TAFII complex (TFTC), the PCAF histone acetylase complex and the STAGA transcription coactivator-HAT complex. TFIID or TFTC are essential for the regulation of RNA polymerase II-mediated transcription. The protein is Transcription initiation factor TFIID subunit 9B (TAF9B) of Homo sapiens (Human).